Here is a 177-residue protein sequence, read N- to C-terminus: Large ribosomal subunit protein uL6 (177 aa).

The disordered stretch occupies residues 151 to 177 (KRPPEPYKGKGVKYADEHIRRKEGKKS). The span at 152-177 (RPPEPYKGKGVKYADEHIRRKEGKKS) shows a compositional bias: basic and acidic residues.

Belongs to the universal ribosomal protein uL6 family. Part of the 50S ribosomal subunit.

In terms of biological role, this protein binds to the 23S rRNA, and is important in its secondary structure. It is located near the subunit interface in the base of the L7/L12 stalk, and near the tRNA binding site of the peptidyltransferase center. The chain is Large ribosomal subunit protein uL6 from Fusobacterium nucleatum subsp. nucleatum (strain ATCC 25586 / DSM 15643 / BCRC 10681 / CIP 101130 / JCM 8532 / KCTC 2640 / LMG 13131 / VPI 4355).